Here is a 156-residue protein sequence, read N- to C-terminus: Small ribosomal subunit protein uS7c (156 aa).

Belongs to the universal ribosomal protein uS7 family. In terms of assembly, part of the 30S ribosomal subunit.

It localises to the plastid. The protein resides in the chloroplast. In terms of biological role, one of the primary rRNA binding proteins, it binds directly to 16S rRNA where it nucleates assembly of the head domain of the 30S subunit. This Cyanidium caldarium (Red alga) protein is Small ribosomal subunit protein uS7c (rps7).